A 455-amino-acid polypeptide reads, in one-letter code: EP1-like glycoprotein 2 (455 aa).

The N-terminal stretch at 1–22 is a signal peptide; it reads MSRFAILVTLALAIATVSVVIA. The region spanning 44-163 is the Bulb-type lectin domain; the sequence is EYDASYRFIE…NGKFVWQSFD (120 aa). N-linked (GlcNAc...) asparagine glycans are attached at residues Asn-56, Asn-106, Asn-191, Asn-211, Asn-241, and Asn-289. An S-nitrosocysteine modification is found at Cys-374. The 82-residue stretch at 374-455 folds into the PAN domain; sequence CSGVKGKTVN…NTSSVAYIKY (82 aa). Intrachain disulfides connect Cys-410–Cys-432 and Cys-414–Cys-420. The N-linked (GlcNAc...) asparagine glycan is linked to Asn-446.

Its subcellular location is the secreted. The protein localises to the cell wall. The chain is EP1-like glycoprotein 2 from Arabidopsis thaliana (Mouse-ear cress).